A 404-amino-acid polypeptide reads, in one-letter code: Argininosuccinate synthase (404 aa).

Residues 11–19 (AYSGGLDTS) and Ala-40 contribute to the ATP site. L-citrulline is bound by residues Tyr-92 and Ser-97. ATP is bound at residue Gly-122. The L-aspartate site is built by Thr-124, Asn-128, and Asp-129. Position 128 (Asn-128) interacts with L-citrulline. L-citrulline-binding residues include Arg-132, Ser-181, Ser-190, Glu-266, and Tyr-278.

It belongs to the argininosuccinate synthase family. Type 1 subfamily. As to quaternary structure, homotetramer.

The protein localises to the cytoplasm. The enzyme catalyses L-citrulline + L-aspartate + ATP = 2-(N(omega)-L-arginino)succinate + AMP + diphosphate + H(+). It functions in the pathway amino-acid biosynthesis; L-arginine biosynthesis; L-arginine from L-ornithine and carbamoyl phosphate: step 2/3. This Moritella abyssi protein is Argininosuccinate synthase.